The sequence spans 145 residues: 3-dehydroquinate dehydratase (145 aa).

The Proton acceptor role is filled by Tyr-22. Asn-74, His-80, and Asp-87 together coordinate substrate. His-100 acts as the Proton donor in catalysis. Substrate is bound by residues 101-102 (IS) and Arg-111.

This sequence belongs to the type-II 3-dehydroquinase family. Homododecamer.

It catalyses the reaction 3-dehydroquinate = 3-dehydroshikimate + H2O. It participates in metabolic intermediate biosynthesis; chorismate biosynthesis; chorismate from D-erythrose 4-phosphate and phosphoenolpyruvate: step 3/7. Catalyzes a trans-dehydration via an enolate intermediate. The protein is 3-dehydroquinate dehydratase of Lachnoclostridium phytofermentans (strain ATCC 700394 / DSM 18823 / ISDg) (Clostridium phytofermentans).